The sequence spans 710 residues: U3 small nucleolar RNA-associated protein 4 (710 aa).

9 WD repeats span residues 11–59 (YTPS…CLKT), 64–105 (GVDR…PLVN), 108–147 (SNAG…GVIE), 154–192 (RQTS…SAII), 199–241 (RARK…LSQS), 290–327 (FHSH…RQFN), 328–365 (RKNH…LWRI), 488–527 (SMCD…YSEL), and 529–569 (RVNT…LSEW).

Component of the ribosomal small subunit (SSU) processome.

Its subcellular location is the nucleus. The protein localises to the nucleolus. Functionally, involved in nucleolar processing of pre-18S ribosomal RNA. Required for optimal pre-ribosomal RNA transcription by RNA polymerase I together with a subset of U3 proteins required for transcription (t-UTPs). The protein is U3 small nucleolar RNA-associated protein 4 (utp4) of Schizosaccharomyces pombe (strain 972 / ATCC 24843) (Fission yeast).